The chain runs to 201 residues: Cytochrome c biogenesis ATP-binding export protein CcmA (201 aa).

Residues 3–200 enclose the ABC transporter domain; that stretch reads LIAENLGGER…EGAELRMGVA (198 aa). 35–42 contributes to the ATP binding site; the sequence is GPNGSGKS.

This sequence belongs to the ABC transporter superfamily. CcmA exporter (TC 3.A.1.107) family. The complex is composed of two ATP-binding proteins (CcmA) and two transmembrane proteins (CcmB).

The protein resides in the cell inner membrane. It carries out the reaction heme b(in) + ATP + H2O = heme b(out) + ADP + phosphate + H(+). Its function is as follows. Part of the ABC transporter complex CcmAB involved in the biogenesis of c-type cytochromes; once thought to export heme, this seems not to be the case, but its exact role is uncertain. Responsible for energy coupling to the transport system. The polypeptide is Cytochrome c biogenesis ATP-binding export protein CcmA (Mesorhizobium japonicum (strain LMG 29417 / CECT 9101 / MAFF 303099) (Mesorhizobium loti (strain MAFF 303099))).